We begin with the raw amino-acid sequence, 85 residues long: UPF0181 protein YPTS_1774 (85 aa).

Over residues 57-72 the composition is skewed to basic and acidic residues; sequence DHDFDEHTESDYRRDD. Positions 57 to 85 are disordered; the sequence is DHDFDEHTESDYRRDDEPDADDIEDLYEG. Residues 73 to 85 are compositionally biased toward acidic residues; sequence EPDADDIEDLYEG.

It belongs to the UPF0181 family.

The chain is UPF0181 protein YPTS_1774 from Yersinia pseudotuberculosis serotype IB (strain PB1/+).